The chain runs to 324 residues: Holliday junction branch migration complex subunit RuvB (324 aa).

Residues 1-168 (MEDLALRPKT…FGIVEHLEYY (168 aa)) are large ATPase domain (RuvB-L). ATP contacts are provided by residues L6, R7, G48, K51, T52, T53, 115 to 117 (EDF), R158, Y168, and R205. Position 52 (T52) interacts with Mg(2+). The interval 169-239 (TPEELAQGVM…RALEALAALG (71 aa)) is small ATPAse domain (RuvB-S). The segment at 242-324 (ELGLEKRDRE…PPPVGPLLEP (83 aa)) is head domain (RuvB-H). Residues R297 and R302 each contribute to the DNA site.

This sequence belongs to the RuvB family. In terms of assembly, homohexamer. Forms an RuvA(8)-RuvB(12)-Holliday junction (HJ) complex. HJ DNA is sandwiched between 2 RuvA tetramers; dsDNA enters through RuvA and exits via RuvB. An RuvB hexamer assembles on each DNA strand where it exits the tetramer. Each RuvB hexamer is contacted by two RuvA subunits (via domain III) on 2 adjacent RuvB subunits; this complex drives branch migration. In the full resolvosome a probable DNA-RuvA(4)-RuvB(12)-RuvC(2) complex forms which resolves the HJ.

Its subcellular location is the cytoplasm. It carries out the reaction ATP + H2O = ADP + phosphate + H(+). The ATPase activity of RuvB is enhanced by RuvA. In terms of biological role, the RuvA-RuvB-RuvC complex processes Holliday junction (HJ) DNA during genetic recombination and DNA repair, while the RuvA-RuvB complex plays an important role in the rescue of blocked DNA replication forks via replication fork reversal (RFR). RuvA specifically binds to HJ cruciform DNA, conferring on it an open structure. The RuvB hexamer acts as an ATP-dependent pump, pulling dsDNA into and through the RuvAB complex. RuvB forms 2 homohexamers on either side of HJ DNA bound by 1 or 2 RuvA tetramers; 4 subunits per hexamer contact DNA at a time. Coordinated motions by a converter formed by DNA-disengaged RuvB subunits stimulates ATP hydrolysis and nucleotide exchange. Immobilization of the converter enables RuvB to convert the ATP-contained energy into a lever motion, pulling 2 nucleotides of DNA out of the RuvA tetramer per ATP hydrolyzed, thus driving DNA branch migration. The RuvB motors rotate together with the DNA substrate, which together with the progressing nucleotide cycle form the mechanistic basis for DNA recombination by continuous HJ branch migration. Branch migration allows RuvC to scan DNA until it finds its consensus sequence, where it cleaves and resolves cruciform DNA. Has Mg(2+)-, DNA-dependent ATPase activity; dsDNA and supercoiled DNA but not ssDNA stimulate activity. Binds to linear dsDNA in the absence of ATP or ATP-gamma-S. This subunit can promote Holliday junction migration alone in vitro. Partially complements an E.coli deletion for UV sensitivity. The chain is Holliday junction branch migration complex subunit RuvB from Thermus thermophilus.